The primary structure comprises 93 residues: Cobalt transport protein CbiN (93 aa).

2 helical membrane passes run 5 to 25 (LILL…DHGG) and 62 to 82 (SLLF…ILGY).

Belongs to the CbiN family. In terms of assembly, forms an energy-coupling factor (ECF) transporter complex composed of an ATP-binding protein (A component, CbiO), a transmembrane protein (T component, CbiQ) and 2 possible substrate-capture proteins (S components, CbiM and CbiN) of unknown stoichimetry.

The protein localises to the cell inner membrane. Its pathway is cofactor biosynthesis; adenosylcobalamin biosynthesis. Functionally, part of the energy-coupling factor (ECF) transporter complex CbiMNOQ involved in cobalt import. The protein is Cobalt transport protein CbiN of Citrobacter koseri (strain ATCC BAA-895 / CDC 4225-83 / SGSC4696).